Here is a 489-residue protein sequence, read N- to C-terminus: Amino acid transporter AVT6E (489 aa).

11 helical membrane passes run 76-96 (GIYG…IMAL), 102-122 (VLGL…SEIS), 156-176 (ICII…MGDV), 201-221 (VLIL…NKID), 227-247 (SAAS…VATI), 269-289 (ILDL…HFNV), 310-330 (ITTA…YLLF), 357-377 (IVRI…HFSL), 404-424 (VVLL…WTAF), 425-445 (KFTG…LIAL), and 461-481 (VSWL…IGNI).

The protein belongs to the amino acid/polyamine transporter 2 family. Amino acid/auxin permease (AAAP) (TC 2.A.18.6) subfamily.

Its subcellular location is the endoplasmic reticulum membrane. It is found in the vacuole membrane. In Arabidopsis thaliana (Mouse-ear cress), this protein is Amino acid transporter AVT6E.